An 82-amino-acid polypeptide reads, in one-letter code: Putative antiholin (82 aa).

Over 1–8 (MKMDTGTK) the chain is Cytoplasmic. Residues 9–25 (VRTILFLIAWVNQLLSF) form a helical membrane-spanning segment. Residues 26–40 (DNLEPIPVDETTAQQ) are Periplasmic-facing. Residues 41 to 57 (VYDAVSVLFTIVVTVWT) form a helical membrane-spanning segment. Residues 58–82 (SFKNNYLTLKGRKQREALKKNGLTK) lie on the Cytoplasmic side of the membrane.

Homomultimer. Interacts with isoform Antiholin; this interaction blocks the holin homomultimerization and delays host cell lysis.

Its subcellular location is the host cell inner membrane. Its function is as follows. Probably functions as a holin together with holin-like protein 26. Accumulates harmlessly in the cytoplasmic membrane until it reaches a critical concentration that triggers the formation of micron-scale pores (holes) causing host cell membrane disruption and endolysin escape into the periplasmic space. Determines the precise timing of host cell lysis. Counteracts the aggregation of the holin molecules and thus of pore formation. The polypeptide is Putative antiholin (26) (Bacillus subtilis (Bacteriophage SPP1)).